Reading from the N-terminus, the 369-residue chain is Glutamate 5-kinase (369 aa).

Lys11 contributes to the ATP binding site. Substrate is bound by residues Ser51, Asp138, and Asn150. ATP is bound by residues 170 to 171 (TD) and 212 to 218 (TGGMATK). In terms of domain architecture, PUA spans 277–355 (KGSIVIDEGA…QDIYAVLGYE (79 aa)).

It belongs to the glutamate 5-kinase family.

It is found in the cytoplasm. The catalysed reaction is L-glutamate + ATP = L-glutamyl 5-phosphate + ADP. It functions in the pathway amino-acid biosynthesis; L-proline biosynthesis; L-glutamate 5-semialdehyde from L-glutamate: step 1/2. In terms of biological role, catalyzes the transfer of a phosphate group to glutamate to form L-glutamate 5-phosphate. This chain is Glutamate 5-kinase, found in Aliivibrio fischeri (strain ATCC 700601 / ES114) (Vibrio fischeri).